The following is a 207-amino-acid chain: CASP-like protein F16 (207 aa).

A disordered region spans residues 1-30 (MEKSEKGNGVAPATRSPMALMGSSRNENQE). The Cytoplasmic segment spans residues 1-37 (MEKSEKGNGVAPATRSPMALMGSSRNENQEVNTSMRT). Residues 38-58 (AETMLRLVPMALGVAALVVML) traverse the membrane as a helical segment. The Extracellular segment spans residues 59-79 (KNSQSNDFGSVSYSDLGAFRY). The helical transmembrane segment at 80–100 (LVHANGICAGYSLLSAIIAAV) threads the bilayer. Residues 101–108 (PSPSTMPR) lie on the Cytoplasmic side of the membrane. The helical transmembrane segment at 109–129 (AWTFFLLDQILTYVILGAAAV) threads the bilayer. At 130-159 (STEVLYLANKGDSAITWSAACGTFAGFCHK) the chain is on the extracellular side. A helical transmembrane segment spans residues 160-180 (ATIAVVITFVAVICYAVLSLV). The Cytoplasmic segment spans residues 181–207 (SSYRLFTKFDAPVNYPSKTIEATVFHG).

This sequence belongs to the Casparian strip membrane proteins (CASP) family. Homodimer and heterodimers.

The protein localises to the cell membrane. The protein is CASP-like protein F16 (F16) of Gossypium hirsutum (Upland cotton).